Reading from the N-terminus, the 494-residue chain is Cobyric acid synthase (494 aa).

Positions 249 to 443 (EINVTILRLP…LHGIFDNGAW (195 aa)) constitute a GATase cobBQ-type domain. The Nucleophile role is filled by Cys-330. The active site involves His-435.

The protein belongs to the CobB/CobQ family. CobQ subfamily.

The protein operates within cofactor biosynthesis; adenosylcobalamin biosynthesis. Its function is as follows. Catalyzes amidations at positions B, D, E, and G on adenosylcobyrinic A,C-diamide. NH(2) groups are provided by glutamine, and one molecule of ATP is hydrogenolyzed for each amidation. This Crocosphaera subtropica (strain ATCC 51142 / BH68) (Cyanothece sp. (strain ATCC 51142)) protein is Cobyric acid synthase.